Reading from the N-terminus, the 509-residue chain is 2-isopropylmalate synthase (509 aa).

The 263-residue stretch at Val4–Tyr266 folds into the Pyruvate carboxyltransferase domain. Mn(2+) contacts are provided by Asp13, His201, His203, and Asn237. The segment at Thr390–Gln509 is regulatory domain.

This sequence belongs to the alpha-IPM synthase/homocitrate synthase family. LeuA type 1 subfamily. In terms of assembly, homodimer. It depends on Mn(2+) as a cofactor.

It is found in the cytoplasm. It catalyses the reaction 3-methyl-2-oxobutanoate + acetyl-CoA + H2O = (2S)-2-isopropylmalate + CoA + H(+). It participates in amino-acid biosynthesis; L-leucine biosynthesis; L-leucine from 3-methyl-2-oxobutanoate: step 1/4. Its function is as follows. Catalyzes the condensation of the acetyl group of acetyl-CoA with 3-methyl-2-oxobutanoate (2-ketoisovalerate) to form 3-carboxy-3-hydroxy-4-methylpentanoate (2-isopropylmalate). The polypeptide is 2-isopropylmalate synthase (Carboxydothermus hydrogenoformans (strain ATCC BAA-161 / DSM 6008 / Z-2901)).